We begin with the raw amino-acid sequence, 215 residues long: 7-cyano-7-deazaguanine synthase (215 aa).

8-18 (LSAGLDSTVSL) provides a ligand contact to ATP. Zn(2+) is bound by residues Cys191, Cys199, Cys202, and Cys205.

The protein belongs to the QueC family. As to quaternary structure, homodimer. The cofactor is Zn(2+).

It carries out the reaction 7-carboxy-7-deazaguanine + NH4(+) + ATP = 7-cyano-7-deazaguanine + ADP + phosphate + H2O + H(+). It functions in the pathway purine metabolism; 7-cyano-7-deazaguanine biosynthesis. Functionally, catalyzes the ATP-dependent conversion of 7-carboxy-7-deazaguanine (CDG) to 7-cyano-7-deazaguanine (preQ(0)). This chain is 7-cyano-7-deazaguanine synthase, found in Carboxydothermus hydrogenoformans (strain ATCC BAA-161 / DSM 6008 / Z-2901).